We begin with the raw amino-acid sequence, 119 residues long: MPRVKRGVTARARHQKIFALAKGYRGRRKNVYRVAKQAVMKAGQYAYRDRRQRKRQFRQLWIVRINAGARENGLSYSKFMNGLKRASIEIDRKVLADLAVFDKAAFAQLVEKAKAALAA.

This sequence belongs to the bacterial ribosomal protein bL20 family.

Its function is as follows. Binds directly to 23S ribosomal RNA and is necessary for the in vitro assembly process of the 50S ribosomal subunit. It is not involved in the protein synthesizing functions of that subunit. The sequence is that of Large ribosomal subunit protein bL20 from Neisseria gonorrhoeae (strain ATCC 700825 / FA 1090).